A 229-amino-acid chain; its full sequence is Thylakoid lumenal 19 kDa protein, chloroplastic (229 aa).

It localises to the plastid. The protein resides in the chloroplast thylakoid lumen. The protein is Thylakoid lumenal 19 kDa protein, chloroplastic of Arabidopsis thaliana (Mouse-ear cress).